Consider the following 159-residue polypeptide: Transmembrane protein 88 (159 aa).

The next 2 membrane-spanning stretches (helical) occupy residues leucine 43–phenylalanine 63 and phenylalanine 88–alanine 108.

It belongs to the TMEM88 family. Interacts (via C-terminus) with DVL1.

Its subcellular location is the cell membrane. Functionally, inhibits the Wnt/beta-catenin signaling pathway. Crucial for heart development and acts downstream of GATA factors in the pre-cardiac mesoderm to specify lineage commitment of cardiomyocyte development. The sequence is that of Transmembrane protein 88 (Tmem88) from Mus musculus (Mouse).